A 174-amino-acid polypeptide reads, in one-letter code: Shikimate kinase 2 (174 aa).

12-17 (GAGKTT) contacts ATP. 2 residues coordinate Mg(2+): threonine 16 and aspartate 32. Positions 34, 58, and 79 each coordinate substrate. An LID domain region spans residues 112-126 (AEDPEEAQRPSLTGK). Residue arginine 120 coordinates ATP. Arginine 139 contributes to the substrate binding site. Position 155 (glutamine 155) interacts with ATP.

The protein belongs to the shikimate kinase family. AroL subfamily. As to quaternary structure, monomer. The cofactor is Mg(2+).

It localises to the cytoplasm. The catalysed reaction is shikimate + ATP = 3-phosphoshikimate + ADP + H(+). The protein operates within metabolic intermediate biosynthesis; chorismate biosynthesis; chorismate from D-erythrose 4-phosphate and phosphoenolpyruvate: step 5/7. Its function is as follows. Catalyzes the specific phosphorylation of the 3-hydroxyl group of shikimic acid using ATP as a cosubstrate. The sequence is that of Shikimate kinase 2 from Yersinia pestis bv. Antiqua (strain Antiqua).